The primary structure comprises 313 residues: 4-hydroxy-3-methylbut-2-enyl diphosphate reductase (313 aa).

Residue cysteine 12 coordinates [4Fe-4S] cluster. (2E)-4-hydroxy-3-methylbut-2-enyl diphosphate-binding residues include histidine 41 and histidine 74. Dimethylallyl diphosphate-binding residues include histidine 41 and histidine 74. 2 residues coordinate isopentenyl diphosphate: histidine 41 and histidine 74. A [4Fe-4S] cluster-binding site is contributed by cysteine 96. (2E)-4-hydroxy-3-methylbut-2-enyl diphosphate is bound at residue histidine 124. Position 124 (histidine 124) interacts with dimethylallyl diphosphate. Histidine 124 provides a ligand contact to isopentenyl diphosphate. The active-site Proton donor is the glutamate 126. Residue threonine 167 coordinates (2E)-4-hydroxy-3-methylbut-2-enyl diphosphate. Cysteine 197 serves as a coordination point for [4Fe-4S] cluster. Residues serine 225, serine 226, asparagine 227, and serine 269 each contribute to the (2E)-4-hydroxy-3-methylbut-2-enyl diphosphate site. Dimethylallyl diphosphate contacts are provided by serine 225, serine 226, asparagine 227, and serine 269. Serine 225, serine 226, asparagine 227, and serine 269 together coordinate isopentenyl diphosphate.

It belongs to the IspH family. As to quaternary structure, homodimer. [4Fe-4S] cluster serves as cofactor.

The enzyme catalyses isopentenyl diphosphate + 2 oxidized [2Fe-2S]-[ferredoxin] + H2O = (2E)-4-hydroxy-3-methylbut-2-enyl diphosphate + 2 reduced [2Fe-2S]-[ferredoxin] + 2 H(+). The catalysed reaction is dimethylallyl diphosphate + 2 oxidized [2Fe-2S]-[ferredoxin] + H2O = (2E)-4-hydroxy-3-methylbut-2-enyl diphosphate + 2 reduced [2Fe-2S]-[ferredoxin] + 2 H(+). It functions in the pathway isoprenoid biosynthesis; dimethylallyl diphosphate biosynthesis; dimethylallyl diphosphate from (2E)-4-hydroxy-3-methylbutenyl diphosphate: step 1/1. It participates in isoprenoid biosynthesis; isopentenyl diphosphate biosynthesis via DXP pathway; isopentenyl diphosphate from 1-deoxy-D-xylulose 5-phosphate: step 6/6. Functionally, catalyzes the conversion of 1-hydroxy-2-methyl-2-(E)-butenyl 4-diphosphate (HMBPP) into a mixture of isopentenyl diphosphate (IPP) and dimethylallyl diphosphate (DMAPP). Acts in the terminal step of the DOXP/MEP pathway for isoprenoid precursor biosynthesis. This chain is 4-hydroxy-3-methylbut-2-enyl diphosphate reductase, found in Buchnera aphidicola subsp. Schizaphis graminum (strain Sg).